The sequence spans 883 residues: Alanine--tRNA ligase (883 aa).

The Zn(2+) site is built by H563, H567, C677, and H681.

It belongs to the class-II aminoacyl-tRNA synthetase family. Requires Zn(2+) as cofactor.

The protein localises to the cytoplasm. The enzyme catalyses tRNA(Ala) + L-alanine + ATP = L-alanyl-tRNA(Ala) + AMP + diphosphate. Its function is as follows. Catalyzes the attachment of alanine to tRNA(Ala) in a two-step reaction: alanine is first activated by ATP to form Ala-AMP and then transferred to the acceptor end of tRNA(Ala). Also edits incorrectly charged Ser-tRNA(Ala) and Gly-tRNA(Ala) via its editing domain. In Cereibacter sphaeroides (strain ATCC 17029 / ATH 2.4.9) (Rhodobacter sphaeroides), this protein is Alanine--tRNA ligase.